A 238-amino-acid chain; its full sequence is Ribonuclease PH (238 aa).

Phosphate-binding positions include R86 and 124–126 (GTR).

It belongs to the RNase PH family. As to quaternary structure, homohexameric ring arranged as a trimer of dimers.

It carries out the reaction tRNA(n+1) + phosphate = tRNA(n) + a ribonucleoside 5'-diphosphate. Functionally, phosphorolytic 3'-5' exoribonuclease that plays an important role in tRNA 3'-end maturation. Removes nucleotide residues following the 3'-CCA terminus of tRNAs; can also add nucleotides to the ends of RNA molecules by using nucleoside diphosphates as substrates, but this may not be physiologically important. Probably plays a role in initiation of 16S rRNA degradation (leading to ribosome degradation) during starvation. This chain is Ribonuclease PH, found in Parvibaculum lavamentivorans (strain DS-1 / DSM 13023 / NCIMB 13966).